Reading from the N-terminus, the 377-residue chain is Tryptophan 2,3-dioxygenase (377 aa).

Substrate contacts are provided by residues 57–61 (FIITH) and R128. H313 lines the heme pocket. T328 contacts substrate.

This sequence belongs to the tryptophan 2,3-dioxygenase family. As to quaternary structure, homotetramer. Dimer of dimers. It depends on heme as a cofactor.

The enzyme catalyses L-tryptophan + O2 = N-formyl-L-kynurenine. It participates in amino-acid degradation; L-tryptophan degradation via kynurenine pathway; L-kynurenine from L-tryptophan: step 1/2. Its pathway is pigment biosynthesis; ommochrome biosynthesis. Heme-dependent dioxygenase that catalyzes the oxidative cleavage of the L-tryptophan (L-Trp) pyrrole ring and converts L-tryptophan to N-formyl-L-kynurenine. Catalyzes the oxidative cleavage of the indole moiety. The protein is Tryptophan 2,3-dioxygenase of Drosophila grimshawi (Hawaiian fruit fly).